The sequence spans 264 residues: Exodeoxyribonuclease YycJ (264 aa).

Residues His58, His60, Asp62, His63, and Asp145 each coordinate a divalent metal cation.

Belongs to the metallo-beta-lactamase superfamily. It depends on Fe(2+) as a cofactor. Requires Zn(2+) as cofactor. Mn(2+) is required as a cofactor.

Its function is as follows. 5'-&gt;3' double-stranded DNA exonuclease. May play a role in mutation mismatch repair (MMR). Required for accurate coordination of cell division with DNA replication. May play a role in cell wall metabolism. The polypeptide is Exodeoxyribonuclease YycJ (Bacillus anthracis).